The following is a 118-amino-acid chain: Myotrophin (118 aa).

3 ANK repeats span residues 1–30 (MGDK…DVNR), 34–65 (GGRK…NAAD), and 67–98 (HGIT…NVKG).

The protein belongs to the myotrophin family.

It is found in the cytoplasm. It localises to the nucleus. The protein localises to the perinuclear region. Regulates NF-kappa-B transcription factor activity. Promotes growth of cardiomyocytes, but not cardiomyocyte proliferation. Promotes cardiac muscle hypertrophy. Plays a role in the regulation of the growth of actin filaments. Inhibits the activity of the F-actin-capping protein complex. The chain is Myotrophin (mtpn) from Xenopus laevis (African clawed frog).